The chain runs to 186 residues: Casparian strip membrane protein 3 (186 aa).

Residues 1–26 (MTKSTYVELGEEKTSNQKGNMKRGVS) are Cytoplasmic-facing. The helical transmembrane segment at 27–47 (ILDFILRLIAIVATLASAIAM) threads the bilayer. Over 48–74 (GTTDESLPFFTQFVRFRANYDDLPTLR) the chain is Extracellular. Residues 75–95 (FFVVASAIVSGYLILSLPLSI) traverse the membrane as a helical segment. Residues 96–107 (LHIIRSSAGMTR) lie on the Cytoplasmic side of the membrane. A helical membrane pass occupies residues 108 to 128 (VIFIILDTVMLGLLTAGSSAA). At 129-161 (ASIVYLAHKGNRKANWFAFCQQYNSFCERISGS) the chain is on the extracellular side. The helical transmembrane segment at 162–182 (LIGSFIAIPLFIMLILLSALV) threads the bilayer. Residues 183-186 (LSRR) lie on the Cytoplasmic side of the membrane.

The protein belongs to the Casparian strip membrane proteins (CASP) family. Homodimer and heterodimers.

Its subcellular location is the cell membrane. Regulates membrane-cell wall junctions and localized cell wall deposition. Required for establishment of the Casparian strip membrane domain (CSD) and the subsequent formation of Casparian strips, a cell wall modification of the root endodermis that determines an apoplastic barrier between the intraorganismal apoplasm and the extraorganismal apoplasm and prevents lateral diffusion. The chain is Casparian strip membrane protein 3 from Medicago truncatula (Barrel medic).